The following is a 484-amino-acid chain: tRNA-2-methylthio-N(6)-dimethylallyladenosine synthase (484 aa).

The MTTase N-terminal domain maps to 36-153 (GKLYIKTHGC…LPELIRARRE (118 aa)). [4Fe-4S] cluster-binding residues include Cys-45, Cys-82, Cys-116, Cys-190, Cys-194, and Cys-197. The Radical SAM core domain maps to 176–415 (RAEGPSAFVS…HISAHAASIS (240 aa)). One can recognise a TRAM domain in the interval 416–479 (QSMVGSVQRV…SNSLRGRIQL (64 aa)). The segment at 428 to 450 (EGPSRRDPNELTGKSENMRPVNF) is disordered.

It belongs to the methylthiotransferase family. MiaB subfamily. As to quaternary structure, monomer. Requires [4Fe-4S] cluster as cofactor.

It is found in the cytoplasm. The catalysed reaction is N(6)-dimethylallyladenosine(37) in tRNA + (sulfur carrier)-SH + AH2 + 2 S-adenosyl-L-methionine = 2-methylsulfanyl-N(6)-dimethylallyladenosine(37) in tRNA + (sulfur carrier)-H + 5'-deoxyadenosine + L-methionine + A + S-adenosyl-L-homocysteine + 2 H(+). In terms of biological role, catalyzes the methylthiolation of N6-(dimethylallyl)adenosine (i(6)A), leading to the formation of 2-methylthio-N6-(dimethylallyl)adenosine (ms(2)i(6)A) at position 37 in tRNAs that read codons beginning with uridine. The polypeptide is tRNA-2-methylthio-N(6)-dimethylallyladenosine synthase (Xanthomonas oryzae pv. oryzae (strain MAFF 311018)).